Consider the following 285-residue polypeptide: 2-dehydro-3-deoxyphosphooctonate aldolase (285 aa).

Belongs to the KdsA family.

The protein resides in the cytoplasm. The catalysed reaction is D-arabinose 5-phosphate + phosphoenolpyruvate + H2O = 3-deoxy-alpha-D-manno-2-octulosonate-8-phosphate + phosphate. Its pathway is carbohydrate biosynthesis; 3-deoxy-D-manno-octulosonate biosynthesis; 3-deoxy-D-manno-octulosonate from D-ribulose 5-phosphate: step 2/3. The protein operates within bacterial outer membrane biogenesis; lipopolysaccharide biosynthesis. This Bordetella bronchiseptica (strain ATCC BAA-588 / NCTC 13252 / RB50) (Alcaligenes bronchisepticus) protein is 2-dehydro-3-deoxyphosphooctonate aldolase.